A 557-amino-acid polypeptide reads, in one-letter code: NADP-dependent malic enzyme (557 aa).

Tyrosine 91 (proton donor) is an active-site residue. NADP(+) is bound at residue arginine 144. The active-site Proton acceptor is the lysine 162. Residues glutamate 234, aspartate 235, and aspartate 258 each coordinate a divalent metal cation. Residues aspartate 258, glycine 290–glutamate 307, and asparagine 397 contribute to the NADP(+) site.

It belongs to the malic enzymes family. In terms of assembly, homotetramer. It depends on Mg(2+) as a cofactor. The cofactor is Mn(2+).

Its subcellular location is the cytoplasm. It carries out the reaction (S)-malate + NADP(+) = pyruvate + CO2 + NADPH. The enzyme catalyses oxaloacetate + H(+) = pyruvate + CO2. The protein is NADP-dependent malic enzyme (ME1) of Anas platyrhynchos (Mallard).